The chain runs to 251 residues: Derlin-1 (251 aa).

The residue at position 2 (serine 2) is an N-acetylserine. Residues 2 to 15 lie on the Cytoplasmic side of the membrane; sequence SDIGDWFRSIPAIT. Residues 16–31 traverse the membrane as a helical segment; sequence RYWFAATVAVPLIGKL. Topologically, residues 32–69 are lumenal; the sequence is GIISPAYFFLWPEAFLYRFQIWRPFTATFYFPVGPGTG. Residues 70–89 form a helical membrane-spanning segment; the sequence is FLYLVNLYFLYQYSTRLEAG. The Cytoplasmic segment spans residues 90–94; the sequence is AFDGR. Residues 95 to 115 form a helical membrane-spanning segment; the sequence is PADYLFMLLFNWICIVITGLA. Residues 116-122 are Lumenal-facing; that stretch reads MDMQLLM. Residues 123-137 form a helical membrane-spanning segment; sequence IPLIMSVLYVWAQLN. Over 138–154 the chain is Cytoplasmic; it reads RDLIVSFWFGTRFKACY. Residues 155-166 traverse the membrane as a helical segment; the sequence is LPWVILGFNYII. Topologically, residues 167 to 170 are lumenal; that stretch reads GGSV. A helical transmembrane segment spans residues 171 to 189; sequence INELIGNLVGHLYFFLMFR. Over 190 to 251 the chain is Cytoplasmic; sequence YPMDLGGRNF…WGQGFRLGDQ (62 aa). Phosphoserine is present on serine 201. At threonine 202 the chain carries Phosphothreonine. Serine 226 carries the post-translational modification Phosphoserine. Residues 229-251 form a disordered region; the sequence is RAADQNGGGGRHNWGQGFRLGDQ. Residues 241-248 carry the SHP-box motif; sequence NWGQGFRL.

It belongs to the derlin family. In terms of assembly, homotetramer. The four subunits of the tetramer are arranged in a twofold symmetry. Forms homo- and heterooligomers with DERL2 and DERL3; binding to DERL3 is poorer than that between DERL2 and DERL3. Interacts (via SHP-box motif) with VCP. Interacts with AMFR, SELENOS, SEL1L, SELENOK and SYVN1, as well as with SEL1L-SYVN1 and VCP-SELENOS protein complexes; this interaction is weaker than that observed between DERL2 and these complexes. Interacts with NGLY1 and YOD1. Does not bind to EDEM1. Interacts with DNAJB9. Interacts with RNF103. Interacts with HM13. Interacts with XBP1 isoform 1 (via luminal/ectodomain domain); the interaction obviates the need for ectodomain shedding prior HM13/SPP-mediated XBP1 isoform 1 cleavage. Interacts with the signal recognition particle/SRP and the SRP receptor; in the process of endoplasmic reticulum stress-induced pre-emptive quality control. May interact with UBXN6. Interacts with ZFAND2B; probably through VCP. Interacts with CCDC47. Interacts with C18orf32. May interact with TRAM1. Forms a complex with SVIP and VCP/p97. Widely expressed, with lowest levels in brain and heart.

Its subcellular location is the endoplasmic reticulum membrane. Functionally, functional component of endoplasmic reticulum-associated degradation (ERAD) for misfolded lumenal proteins. Forms homotetramers which encircle a large channel traversing the endoplasmic reticulum (ER) membrane. This allows the retrotranslocation of misfolded proteins from the ER into the cytosol where they are ubiquitinated and degraded by the proteasome. The channel has a lateral gate within the membrane which provides direct access to membrane proteins with no need to reenter the ER lumen first. May mediate the interaction between VCP and the misfolded protein. Also involved in endoplasmic reticulum stress-induced pre-emptive quality control, a mechanism that selectively attenuates the translocation of newly synthesized proteins into the endoplasmic reticulum and reroutes them to the cytosol for proteasomal degradation. By controlling the steady-state expression of the IGF1R receptor, indirectly regulates the insulin-like growth factor receptor signaling pathway. The sequence is that of Derlin-1 from Mus musculus (Mouse).